We begin with the raw amino-acid sequence, 132 residues long: Small ribosomal subunit protein eS24 (132 aa).

A compositionally biased stretch (basic and acidic residues) spans 92 to 101 (LARHGLYEKK). A disordered region spans residues 92-132 (LARHGLYEKKRPTRKQRKERKNRMKKVRGTKKSKVGAAAKK). The span at 102 to 132 (RPTRKQRKERKNRMKKVRGTKKSKVGAAAKK) shows a compositional bias: basic residues.

Belongs to the eukaryotic ribosomal protein eS24 family.

This is Small ribosomal subunit protein eS24 (RpS24) from Spodoptera frugiperda (Fall armyworm).